The chain runs to 1076 residues: Nickel-cobalt-cadmium resistance protein NccA (1076 aa).

12 consecutive transmembrane segments (helical) span residues 14–34, 367–387, 391–411, 419–439, 476–496, 503–523, 562–582, 904–924, 929–949, 960–980, 1004–1024, and 1036–1056; these read WLVLFLTAVVGAIGAWQLNLL, VAKNLVEGAALVVVILFALLG, AAVIAALVIPLSLLISAIGMN, LMSLGALDFGLIIDGAVIIVE, TVYGQLVIFMVFLPCLTFQGV, PMVITLMLALASAFVLSLTFV, MPFLGAALVTLALAAMAFTFV, LAIIVPLCFILIAATLYMAIG, TATVLTAVPLALAGGVFALVL, VGFIAVSGVAVLNGLVLISAI, PVLMTALVASLGFVPMAIATG, and VVIGGLITATVLTLFVLPAVC.

This sequence belongs to the resistance-nodulation-cell division (RND) (TC 2.A.6) family.

Its subcellular location is the cell membrane. In terms of biological role, component of the NCC cation-efflux system that confers resistance to nickel, cobalt and cadmium. May form a membrane tunnel, which allows ion transport across the membrane. In Alcaligenes xylosoxydans xylosoxydans (Achromobacter xylosoxidans), this protein is Nickel-cobalt-cadmium resistance protein NccA (nccA).